The following is a 676-amino-acid chain: DNA ligase (676 aa).

NAD(+) is bound by residues 34–38 (DAEYD), 84–85 (SL), and Glu-116. Residue Lys-118 is the N6-AMP-lysine intermediate of the active site. NAD(+)-binding residues include Arg-139, Glu-174, Lys-294, and Lys-318. Zn(2+)-binding residues include Cys-412, Cys-415, Cys-428, and Cys-433. A BRCT domain is found at 589–676 (KGGEALKGLT…RTGKKAEELV (88 aa)).

The protein belongs to the NAD-dependent DNA ligase family. LigA subfamily. Mg(2+) serves as cofactor. The cofactor is Mn(2+).

It carries out the reaction NAD(+) + (deoxyribonucleotide)n-3'-hydroxyl + 5'-phospho-(deoxyribonucleotide)m = (deoxyribonucleotide)n+m + AMP + beta-nicotinamide D-nucleotide.. In terms of biological role, DNA ligase that catalyzes the formation of phosphodiester linkages between 5'-phosphoryl and 3'-hydroxyl groups in double-stranded DNA using NAD as a coenzyme and as the energy source for the reaction. It is essential for DNA replication and repair of damaged DNA. The protein is DNA ligase of Thermus thermophilus (strain ATCC BAA-163 / DSM 7039 / HB27).